Consider the following 475-residue polypeptide: MSSNPFNPFEAALNWQRKTLENMTDAAETSQVADERLELMESVDVGQTPSNVVYEENKLELLHYDAEAAGIEVPDEEKEDVPILIVYALINRPYILDLQEERSVVRRLLEAGHDVYLIDWNEPSRLDQHLTLDDYVNRYMDNCVDVVRDRSGQDAINILGYCMGGTMSVMYTALHKEKVNTLGLMAAGLCFDHTGGVLEEWGSEEYYSPQDVVDTFGNVPADMLDIGFALMDPVENYVTKYIRFAENMENEGFVENFGRMEQWLGDGIDVAGEAYVQFLEDVYQDNKLYKNELELDGKHVDLDNIDMPVLQLMGEYDHLIPPEASKPFNDVIASDDTRTIEFSTGHIGLSVSSSTHADLWPEVAEWYSERSTGSEEVDIEVESPEAAEDDAVDQSELTDIDVDATDDVDADATEDDATDEPADVDSVSGIGPTYAERLHDAGIHSVADLAEYDAADLADIAETTESRAQDWLDQL.

Residues 82–348 (PILIVYALIN…TIEFSTGHIG (267 aa)) enclose the AB hydrolase-1 domain. Catalysis depends on charge relay system residues cysteine 162, aspartate 317, and histidine 346. The interval 369-431 (ERSTGSEEVD…ADVDSVSGIG (63 aa)) is disordered. Residues 375 to 423 (EEVDIEVESPEAAEDDAVDQSELTDIDVDATDDVDADATEDDATDEPAD) are compositionally biased toward acidic residues.

It belongs to the PHA/PHB synthase family. In terms of assembly, heterodimer with PhaE.

The protein operates within biopolymer metabolism; poly-(R)-3-hydroxybutanoate biosynthesis. Involved in the production of polyhydroxyalkonic acids (PHAs), which are water-insoluble biopolymers used as intracellular energy reserve material when cells grow under conditions of nutrient limitation. PHAs are composed primarily of 3-hydroxybutyric acid (3HB) and 3-hydroxyvaleric acid (3HV). Required for the production of poly-beta-hydroxybutyrate (PHB) and poly(beta-hydroxybutyrate-co-beta-hydroxyvalerate) (PHBV). The polypeptide is Poly(3-hydroxyalkanoate) polymerase subunit PhaC (phaC) (Haloarcula marismortui (strain ATCC 43049 / DSM 3752 / JCM 8966 / VKM B-1809) (Halobacterium marismortui)).